Consider the following 410-residue polypeptide: Sensor-like histidine kinase SenX3 (410 aa).

2 helical membrane passes run Ala-6 to Met-26 and Ile-46 to Val-66. In terms of domain architecture, Histidine kinase spans Asn-164 to Ile-380. Phosphohistidine; by autocatalysis is present on His-167. Residues Asp-385–Arg-410 form a disordered region.

Post-translationally, autophosphorylated.

The protein localises to the cell membrane. It carries out the reaction ATP + protein L-histidine = ADP + protein N-phospho-L-histidine.. Functionally, member of the two-component regulatory system SenX3/RegX3. Autophosphorylates, and then transfers the phosphate group to RegX3. The protein is Sensor-like histidine kinase SenX3 of Mycobacterium bovis (strain ATCC BAA-935 / AF2122/97).